The following is a 574-amino-acid chain: Probable E3 ubiquitin-protein ligase ipaH4.5 (574 aa).

An interaction with target proteins region spans residues 1-284; it reads MKPINNHSFF…YHGPQIYFSM (284 aa). LRR repeat units follow at residues 63–82, 83–104, 105–122, 123–143, 144–165, 166–183, 184–205, 206–223, 224–246, and 247–270; these read REPV…PLPL, HIRE…SPLL, TELH…TLPS, QLIK…SLPP, YLQS…PSTL, TILR…ELPH, RLQE…PQSL, KYLK…RLPQ, ELLA…ITLP, and ICTN…QRLT. A linker region spans residues 285–292; sequence SDGQQNTL. Residues 293 to 574 form an E3 ubiquitin-protein ligase catalytic domain region; sequence HRPLADAVTA…YRQLTDEVLA (282 aa). In terms of domain architecture, NEL spans 295 to 574; it reads PLADAVTAWF…YRQLTDEVLA (280 aa). C379 acts as the Glycyl thioester intermediate in catalysis.

It belongs to the LRR-containing bacterial E3 ligase family. Post-translationally, ubiquitinated in the presence of host E1 ubiquitin-activating enzyme, E2 ubiquitin-conjugating enzyme and ubiquitin.

The protein resides in the secreted. It localises to the host cytoplasm. It catalyses the reaction S-ubiquitinyl-[E2 ubiquitin-conjugating enzyme]-L-cysteine + [acceptor protein]-L-lysine = [E2 ubiquitin-conjugating enzyme]-L-cysteine + N(6)-ubiquitinyl-[acceptor protein]-L-lysine.. Effector proteins function to alter host cell physiology and promote bacterial survival in host tissues. This protein is an E3 ubiquitin ligase that interferes with host's ubiquitination pathway. This Shigella flexneri protein is Probable E3 ubiquitin-protein ligase ipaH4.5 (ipaH4.5).